We begin with the raw amino-acid sequence, 187 residues long: CASP-like protein 2 (187 aa).

The Cytoplasmic portion of the chain corresponds to 1-24 (MKVSAVETGEISQVSAPRKGMIRG). Residues 25–45 (LSIMDFILRIVAAIGTLGSAL) form a helical membrane-spanning segment. Residues 46–72 (STGTTRETLPFTTQFVKFRAVFDDLPT) are Extracellular-facing. The chain crosses the membrane as a helical span at residues 73–93 (FVFFVTSNSIVCGYLVLSLAL). At 94–108 (SFFHIIRRSSAAKSR) the chain is on the cytoplasmic side. A helical membrane pass occupies residues 109–129 (ILLVFLDTVMFGLLTTGAAAA). Residues 130–163 (GTIVYVSHYGNVNANWFPFCGQYNHFCERISGSL) lie on the Extracellular side of the membrane. Residues 164–184 (IGSFIAVVIFMIIILMSAVSI) form a helical membrane-spanning segment. Residues 185–187 (SKH) are Cytoplasmic-facing.

Belongs to the Casparian strip membrane proteins (CASP) family. Homodimer and heterodimers.

Its subcellular location is the cell membrane. The sequence is that of CASP-like protein 2 from Lotus japonicus (Lotus corniculatus var. japonicus).